The primary structure comprises 328 residues: Cytochrome c biogenesis protein CcsA (328 aa).

The next 8 membrane-spanning stretches (helical) occupy residues 13–33 (ISFS…LVNL), 46–66 (GIII…IYSG), 73–93 (LYES…VSYF), 101–121 (LNAI…SGLL), 146–166 (MILG…LLVI), 234–254 (IISL…VWAN), 263–283 (WDPK…YLHI), and 295–315 (AIVA…VNLL).

It belongs to the CcmF/CycK/Ccl1/NrfE/CcsA family. As to quaternary structure, may interact with Ccs1.

It is found in the plastid. The protein localises to the chloroplast thylakoid membrane. In terms of biological role, required during biogenesis of c-type cytochromes (cytochrome c6 and cytochrome f) at the step of heme attachment. This chain is Cytochrome c biogenesis protein CcsA, found in Capsella bursa-pastoris (Shepherd's purse).